Reading from the N-terminus, the 489-residue chain is Cytochrome P450 monooxygenase orf5 (489 aa).

The chain crosses the membrane as a helical span at residues 13 to 35 (FVRLLAFHLIGLFVSITVYRLFF). Residues asparagine 37, asparagine 118, asparagine 171, and asparagine 345 are each glycosylated (N-linked (GlcNAc...) asparagine). Residue cysteine 428 coordinates heme.

Belongs to the cytochrome P450 family. Requires heme as cofactor.

Its subcellular location is the membrane. Its pathway is mycotoxin biosynthesis. Cytochrome P450 monooxygenase; part of the gene cluster that mediates the biosynthesis of brefeldin A (BFA), a protein transport inhibitor that shows antiviral, antifungal, and antitumor properties. The proposed biosynthesis of BFA involves formation of an acyclic polyketide chain that is differentially tailored throughout the backbone. The highly reducing polyketide synthase Bref-PKS is proposed to synthesize the precisely reduced octaketide precursor, which could then be directly offloaded by the thiohydrolase enzyme Bref-TH followed by a cytochrome P450 monooxygenase-mediated formation of the cyclopentane ring and macrocyclization to afford 7-deoxy BFA. Alternatively, the first ring annulation can also occur on the ACP-tethered intermediate before the thiohydrolase release and lactonization. The C7-hydroxylation by another cytochrome P450 monooxygenase is believed to be the final step in the process to obtain the final structure of BFA. In addition to the HRPKS Bref-PKS and the thiohydrolase Bref-TH, the brefeldin A biosynthesis cluster contains 4 cytochrome p450 monooxygenases (called orf3 to orf6), as well a the probable cluster-specific transcription regulator orf8. The protein is Cytochrome P450 monooxygenase orf5 of Eupenicillium brefeldianum (Penicillium brefeldianum).